Here is a 473-residue protein sequence, read N- to C-terminus: Cucurbitadienol 11-hydroxylase (473 aa).

Residues 4-24 (VVLGLATLFVAYYIHWINKWR) form a helical membrane-spanning segment. Cys422 serves as a coordination point for heme.

The protein belongs to the cytochrome P450 family. Heme serves as cofactor. In terms of tissue distribution, highly expressed in young fruits 15 days after anthesis (15-DAA). Also observed in roots.

The protein localises to the membrane. The enzyme catalyses cucurbitadienol + 2 reduced [NADPH--hemoprotein reductase] + 2 O2 = 11-oxocucurbitadienol + 2 oxidized [NADPH--hemoprotein reductase] + 3 H2O + 2 H(+). It carries out the reaction cucurbitadienol + reduced [NADPH--hemoprotein reductase] + O2 = 11-hydroxycucurbitadienol + oxidized [NADPH--hemoprotein reductase] + H2O + H(+). It catalyses the reaction 11-hydroxycucurbitadienol + reduced [NADPH--hemoprotein reductase] + O2 = 11-oxocucurbitadienol + oxidized [NADPH--hemoprotein reductase] + 2 H2O + H(+). The catalysed reaction is (24R)-24,25-dihydroxycucurbitadienol + reduced [NADPH--hemoprotein reductase] + O2 = mogrol + oxidized [NADPH--hemoprotein reductase] + H2O + H(+). The protein operates within secondary metabolite biosynthesis; terpenoid biosynthesis. Hydroxylase involved in the biosynthesis of cucurbitacin and mogroside tetracyclic triterpene natural products (e.g. siamenoside I and mogrosides IV, V and VI). Cucurbitacins have cytotoxic properties and exhibit deterrent taste as a defense barrier against herbivores. Mogrosides are nonsugar highly oxygenated compounds used as high-intensity zero-calorie sweeteners; they also possess pharmacological properties such as regulating immunity, lowering blood sugar and lipid levels, protecting the liver, and acting as antioxidants and antitumor agents. Catalyzes the oxidation of cucurbitadienol at the C-11 position to produce 11-oxocucurbitadienol, a possible biosynthetic intermediate from cucurbitadienol to mogrol. Also mediates the conversion of 24,25-dihydroxycucurbitadienol to mogrol. The chain is Cucurbitadienol 11-hydroxylase from Siraitia grosvenorii (Monk's fruit).